The primary structure comprises 276 residues: MRTLILLGILGATMSAPLIPQRLMSASNSNELLLNLNNAQLQPLQLQGPWIPPFPVILQQRQQQAQIPGLSQFSLANLDWFAGLVPNQRAFPGQVSFAQVTEARQLDPSQPQTSPQTQQGPNYVMPSLLSFKMPPEQGQMLQYYPVYMLLPWEQAQQTAAQSPPQTGQQLFEEQMPFYTELGYVPQQVEPVMPGGQQQPVFDPFLGTAPETAVMTAEVLPYFQKEMIQFKHSNGGIFIPSTSQKPSTTNVFTSTVDPTITPKVMEKKAKTDSLKEP.

The first 15 residues, 1–15, serve as a signal peptide directing secretion; the sequence is MRTLILLGILGATMS. T101, T113, and T117 each carry an O-linked (GalNAc...) threonine glycan. Residues 125-127 are interaction with ARHGEF5; that stretch reads MPS. The O-linked (GalNAc...) serine glycan is linked to S246. T247, T248, and T252 each carry an O-linked (GalNAc...) threonine glycan. The O-linked (GalNAc...) serine glycan is linked to S253. Residues T254, T258, T260, and T270 are each glycosylated (O-linked (GalNAc...) threonine). S272 carries an O-linked (GalNAc...) serine glycan.

The protein belongs to the ODAM family. Interacts (via C-terminus) with ARHGEF5. In terms of processing, O-glycosylated.

It is found in the secreted. The protein resides in the cytoplasm. The protein localises to the nucleus. Functionally, tooth-associated epithelia protein that probably plays a role in odontogenesis, the complex process that results in the initiation and generation of the tooth. May be incorporated in the enamel matrix at the end of mineralization process. Involved in the induction of RHOA activity via interaction with ARHGEF and expression of downstream factors such as ROCK. Plays a role in attachment of the junctional epithelium to the tooth surface. This chain is Odontogenic ameloblast-associated protein (ODAM), found in Sus scrofa (Pig).